The chain runs to 325 residues: Olfactory receptor 1S2 (325 aa).

Over 1–38 the chain is Extracellular; it reads MKTLCSFLQISRNMHQENQTTITEFILLGLSNQAEHQN. N-linked (GlcNAc...) asparagine glycosylation occurs at N18. A helical membrane pass occupies residues 39 to 62; it reads LLFVLFLSMYVVTVVGNGLIIVAI. Residues 63 to 70 are Cytoplasmic-facing; that stretch reads SLDIYLHT. A helical membrane pass occupies residues 71 to 92; that stretch reads PMYLFLAYLSFADISSISNSVP. The Extracellular portion of the chain corresponds to 93-113; sequence KMLVNIQTNSQSISYESCITQ. C110 and C202 are disulfide-bonded. A helical membrane pass occupies residues 114 to 133; it reads MYFSIVFVVTDNLLLGTMAF. The Cytoplasmic portion of the chain corresponds to 134 to 152; the sequence is DHFVAICHPLNYTTFMRAR. A helical membrane pass occupies residues 153-171; the sequence is FGTLLTVISWFLSNIIALT. Over 172–208 the chain is Extracellular; the sequence is HTLLLIQLLFCDHNTLPHFFCDLAPLLKLSCSDTMIN. Residues 209–232 traverse the membrane as a helical segment; sequence ELVLFIVGLSVIIFPFVLIFFSYV. Residues 233 to 249 are Cytoplasmic-facing; sequence CIIRAVLGVSSTQGKWK. A helical transmembrane segment spans residues 250 to 272; the sequence is AFSTCGSHLTIALLFYGTTVGVY. Residues 273–285 lie on the Extracellular side of the membrane; that stretch reads FFPSSTHPEDTDK. Residues 286-305 traverse the membrane as a helical segment; sequence IGAVLFTVVTPMMNPFIYSL. At 306–325 the chain is on the cytoplasmic side; that stretch reads RNKDMKGALRKLINRKISSL.

This sequence belongs to the G-protein coupled receptor 1 family.

The protein localises to the cell membrane. Its function is as follows. Odorant receptor. The sequence is that of Olfactory receptor 1S2 (OR1S2) from Homo sapiens (Human).